The sequence spans 354 residues: Histidinol-phosphate aminotransferase (354 aa).

N6-(pyridoxal phosphate)lysine is present on Lys-215.

The protein belongs to the class-II pyridoxal-phosphate-dependent aminotransferase family. Histidinol-phosphate aminotransferase subfamily. As to quaternary structure, homodimer. Pyridoxal 5'-phosphate is required as a cofactor.

The catalysed reaction is L-histidinol phosphate + 2-oxoglutarate = 3-(imidazol-4-yl)-2-oxopropyl phosphate + L-glutamate. Its pathway is amino-acid biosynthesis; L-histidine biosynthesis; L-histidine from 5-phospho-alpha-D-ribose 1-diphosphate: step 7/9. The polypeptide is Histidinol-phosphate aminotransferase (Vesicomyosocius okutanii subsp. Calyptogena okutanii (strain HA)).